Consider the following 158-residue polypeptide: Large ribosomal subunit protein bL21 (158 aa).

A disordered region spans residues 127 to 158; the sequence is TQETKSAASVKKAAKKSAPQKQAAVASNSKED. Residues 131-158 show a composition bias toward low complexity; the sequence is KSAASVKKAAKKSAPQKQAAVASNSKED.

The protein belongs to the bacterial ribosomal protein bL21 family. Part of the 50S ribosomal subunit. Contacts protein L20.

Its function is as follows. This protein binds to 23S rRNA in the presence of protein L20. This chain is Large ribosomal subunit protein bL21, found in Bartonella henselae (strain ATCC 49882 / DSM 28221 / CCUG 30454 / Houston 1) (Rochalimaea henselae).